Consider the following 643-residue polypeptide: Phosphomethylpyrimidine synthase (643 aa).

Residues Asn-248, Met-277, Tyr-306, His-342, 362-364 (SRG), 403-406 (DGLR), and Glu-442 contribute to the substrate site. Position 446 (His-446) interacts with Zn(2+). Residue Tyr-469 coordinates substrate. His-510 serves as a coordination point for Zn(2+). The [4Fe-4S] cluster site is built by Cys-590, Cys-593, and Cys-598.

The protein belongs to the ThiC family. In terms of assembly, homodimer. It depends on [4Fe-4S] cluster as a cofactor.

It carries out the reaction 5-amino-1-(5-phospho-beta-D-ribosyl)imidazole + S-adenosyl-L-methionine = 4-amino-2-methyl-5-(phosphooxymethyl)pyrimidine + CO + 5'-deoxyadenosine + formate + L-methionine + 3 H(+). The protein operates within cofactor biosynthesis; thiamine diphosphate biosynthesis. Functionally, catalyzes the synthesis of the hydroxymethylpyrimidine phosphate (HMP-P) moiety of thiamine from aminoimidazole ribotide (AIR) in a radical S-adenosyl-L-methionine (SAM)-dependent reaction. This is Phosphomethylpyrimidine synthase from Burkholderia mallei (strain NCTC 10247).